We begin with the raw amino-acid sequence, 340 residues long: Anthranilate phosphoribosyltransferase (340 aa).

5-phospho-alpha-D-ribose 1-diphosphate is bound by residues G81, 84–85 (GD), T89, 91–94 (NIST), 109–117 (KHGNRNLSS), and A121. G81 serves as a coordination point for anthranilate. S93 is a Mg(2+) binding site. N112 lines the anthranilate pocket. R167 contributes to the anthranilate binding site. Residues D226 and E227 each contribute to the Mg(2+) site.

This sequence belongs to the anthranilate phosphoribosyltransferase family. Homodimer. Mg(2+) serves as cofactor.

It carries out the reaction N-(5-phospho-beta-D-ribosyl)anthranilate + diphosphate = 5-phospho-alpha-D-ribose 1-diphosphate + anthranilate. It participates in amino-acid biosynthesis; L-tryptophan biosynthesis; L-tryptophan from chorismate: step 2/5. In terms of biological role, catalyzes the transfer of the phosphoribosyl group of 5-phosphorylribose-1-pyrophosphate (PRPP) to anthranilate to yield N-(5'-phosphoribosyl)-anthranilate (PRA). The chain is Anthranilate phosphoribosyltransferase from Ruegeria sp. (strain TM1040) (Silicibacter sp.).